We begin with the raw amino-acid sequence, 90 residues long: Small ribosomal subunit protein bS20 (90 aa).

The protein belongs to the bacterial ribosomal protein bS20 family.

Its function is as follows. Binds directly to 16S ribosomal RNA. This chain is Small ribosomal subunit protein bS20, found in Mesomycoplasma hyopneumoniae (strain J / ATCC 25934 / NCTC 10110) (Mycoplasma hyopneumoniae).